The following is a 461-amino-acid chain: Argininosuccinate lyase (461 aa).

Belongs to the lyase 1 family. Argininosuccinate lyase subfamily.

The protein localises to the cytoplasm. The enzyme catalyses 2-(N(omega)-L-arginino)succinate = fumarate + L-arginine. It functions in the pathway amino-acid biosynthesis; L-arginine biosynthesis; L-arginine from L-ornithine and carbamoyl phosphate: step 3/3. The sequence is that of Argininosuccinate lyase from Trichormus variabilis (strain ATCC 29413 / PCC 7937) (Anabaena variabilis).